A 61-amino-acid chain; its full sequence is Small ribosomal subunit protein uS14 (61 aa).

Cys-24, Cys-27, Cys-40, and Cys-43 together coordinate Zn(2+).

The protein belongs to the universal ribosomal protein uS14 family. Zinc-binding uS14 subfamily. As to quaternary structure, part of the 30S ribosomal subunit. Contacts proteins S3 and S10. The cofactor is Zn(2+).

Functionally, binds 16S rRNA, required for the assembly of 30S particles and may also be responsible for determining the conformation of the 16S rRNA at the A site. This Desulforamulus reducens (strain ATCC BAA-1160 / DSM 100696 / MI-1) (Desulfotomaculum reducens) protein is Small ribosomal subunit protein uS14.